Here is a 1197-residue protein sequence, read N- to C-terminus: Envelopment polyprotein (1197 aa).

Positions 1–16 (MYVLLTILTSVLVCEA) are cleaved as a signal peptide. Residues 17 to 130 (IIRVSLSSTR…RDAKQIGRKT (114 aa)) lie on the Cytoplasmic side of the membrane. Residues 131-153 (MAGIAMTVLPALAVFALAPVVFA) form an internal signal sequence for glycoprotein N region. The Lumenal segment spans residues 154–582 (EDPHLRNRPG…GLINYQCHTA (429 aa)). 12 cysteine pairs are disulfide-bonded: Cys-179–Cys-188, Cys-229–Cys-239, Cys-250–Cys-281, Cys-271–Cys-284, Cys-304–Cys-456, Cys-322–Cys-332, Cys-374–Cys-434, Cys-402–Cys-413, Cys-420–Cys-425, Cys-479–Cys-482, Cys-486–Cys-556, and Cys-506–Cys-511. Residues 583-603 (LSAFVVVFVFSSIAIICLAIL) form a helical membrane-spanning segment. Over 604–673 (YRVLKCLKIA…APIPRHAPIP (70 aa)) the chain is Cytoplasmic. Residues 608-650 (KCLKIAPRKVLNPLMWITAFIRWIYKKMVARVADNINQVNREI) form a golgi retention signal region. Residues 646 to 650 (VNREI) are important for correct targeting of the glycoproteins to the Golgi complex but not for heterodimerization. The interval 675-690 (YSTYLMLLLIVSYASA) is internal signal sequence for glycoprotein C. 12 disulfide bridges follow: Cys-691/Cys-731, Cys-704/Cys-713, Cys-756/Cys-852, Cys-771/Cys-965, Cys-777/Cys-825, Cys-783/Cys-832, Cys-788/Cys-814, Cys-818/Cys-823, Cys-934/Cys-947, Cys-1029/Cys-1101, Cys-1039/Cys-1042, and Cys-1049/Cys-1083. The Lumenal portion of the chain corresponds to 691 to 1159 (CSELIQASSR…MSWFGGPLKT (469 aa)). The interval 777–783 (CHLVGEC) is fusion loop. N-linked (GlcNAc...) asparagine; by host glycosylation occurs at Asn-794. A fusion loop region spans residues 819 to 830 (GGWGCGCFNVNP). Asn-1035 is a glycosylation site (N-linked (GlcNAc...) asparagine; by host). The N-linked (GlcNAc...) asparagine; by host glycan is linked to Asn-1077. A helical membrane pass occupies residues 1160 to 1180 (ILLICLYVALSIGLFFLLIYL). At 1181-1197 (GGTGLSKMWLAATKKAS) the chain is on the cytoplasmic side.

It belongs to the phlebovirus envelope glycoprotein family. In terms of assembly, heterodimer with glycoprotein C. Homotrimer (postfusion). Interacts with nucleocapsid protein N and with the polymerase L in order to package them into virus particles. Interacts with host E3 ubiquitin-protein ligase UBR4; this interaction is important for viral RNA production. Interacts with host LRP1; this interaction facilitates virus entry into the host cell. As to quaternary structure, heterodimer with glycoprotein C. In terms of processing, specific enzymatic cleavages in vivo yield mature proteins including NSm protein, Glycoprotein C, and Glycoprotein N. Glycosylated. The glycans can attach to host CD209/DC-SIGN, and may play a role in virus entry into dendritic cells. Post-translationally, palmitoylated.

The protein resides in the virion membrane. The protein localises to the host Golgi apparatus membrane. Its subcellular location is the host endoplasmic reticulum membrane. It is found in the host mitochondrion outer membrane. It localises to the host Golgi apparatus. The protein resides in the virion. Structural component of the virion that interacts with glycoprotein C. It shields the hydrophobic fusion loops of the glycoprotein C, preventing premature fusion. The glycoprotein protrusions are arranged on an icosahedral lattice, with T=12 triangulation. They are able to attach the virion to the host cell receptor CD209/DC-SIGN and to promote fusion of membranes with the late endosome after endocytosis of the virion. Plays a role in the packaging of ribonucleoproteins and polymerase during virus assembly. Functionally, structural component of the virion that interacts with glycoprotein N. Acts as a class II fusion protein that is activated upon acidification and subsequent repositioning of the glycoprotein N. The glycoprotein protrusions are arranged on an icosahedral lattice, with T=12 triangulation. They are able to attach the virion to the host cell receptor CD209/DC-SIGN and to promote fusion of membranes with the late endosome after endocytosis of the virion. In terms of biological role, plays a role in the inhibition of virus-induced apoptosis. Plays a role for virus dissemination in vertebrates. Its function is as follows. Plays a role for virus dissemination in mosquitoes. May act as a structural virion protein in insects. In Rift valley fever virus (strain ZH-548 M12) (RVFV), this protein is Envelopment polyprotein (GP).